Here is a 61-residue protein sequence, read N- to C-terminus: Small ribosomal subunit protein uS14B (61 aa).

Cysteine 24, cysteine 27, cysteine 40, and cysteine 43 together coordinate Zn(2+).

This sequence belongs to the universal ribosomal protein uS14 family. Zinc-binding uS14 subfamily. As to quaternary structure, part of the 30S ribosomal subunit. Contacts proteins S3 and S10. Requires Zn(2+) as cofactor.

Functionally, binds 16S rRNA, required for the assembly of 30S particles and may also be responsible for determining the conformation of the 16S rRNA at the A site. The polypeptide is Small ribosomal subunit protein uS14B (Limosilactobacillus reuteri (strain DSM 20016) (Lactobacillus reuteri)).